Here is a 200-residue protein sequence, read N- to C-terminus: FMN-dependent NADH:quinone oxidoreductase 2 (200 aa).

Residue 135–138 (SRGG) participates in FMN binding.

It belongs to the azoreductase type 1 family. Homodimer. It depends on FMN as a cofactor.

The catalysed reaction is 2 a quinone + NADH + H(+) = 2 a 1,4-benzosemiquinone + NAD(+). It catalyses the reaction N,N-dimethyl-1,4-phenylenediamine + anthranilate + 2 NAD(+) = 2-(4-dimethylaminophenyl)diazenylbenzoate + 2 NADH + 2 H(+). Quinone reductase that provides resistance to thiol-specific stress caused by electrophilic quinones. Its function is as follows. Also exhibits azoreductase activity. Catalyzes the reductive cleavage of the azo bond in aromatic azo compounds to the corresponding amines. The protein is FMN-dependent NADH:quinone oxidoreductase 2 of Clostridium acetobutylicum (strain ATCC 824 / DSM 792 / JCM 1419 / IAM 19013 / LMG 5710 / NBRC 13948 / NRRL B-527 / VKM B-1787 / 2291 / W).